Consider the following 279-residue polypeptide: Methyltransferase prhM (279 aa).

Residues 124–125 and 152–153 each bind S-adenosyl-L-methionine; these read DI and DV.

It belongs to the class I-like SAM-binding methyltransferase superfamily.

It functions in the pathway secondary metabolite biosynthesis; terpenoid biosynthesis. Methyltransferase; part of the gene cluster that mediates the biosynthesis of paraherquonin, a meroterpenoid with a unique, highly congested hexacyclic molecular architecture. The first step of the pathway is the synthesis of 3,5-dimethylorsellinic acid (DMOA) by the polyketide synthase prhL. Synthesis of DMOA is followed by farnesylation by the prenyltransferase prhE, methylesterification by the methyl-transferase prhM, epoxidation of the prenyl chain by the flavin-dependent monooxygenase prhF, and cyclization of the farnesyl moiety by the terpene cyclase prhH, to yield the tetracyclic intermediate, protoaustinoid A. The short chain dehydrogenase prhI then oxidizes the C-3 alcohol group of the terpene cyclase product to transform protoaustinoid A into protoaustinoid B. The FAD-binding monooxygenase prhJ catalyzes the oxidation of protoaustinoid B into preaustinoid A which is further oxidized into preaustinoid A1 by FAD-binding monooxygenase phrK. Finally, prhA leads to berkeleydione via the berkeleyone B intermediate. PrhA is a multifunctional dioxygenase that first desaturates at C5-C6 to form berkeleyone B, followed by rearrangement of the A/B-ring to form the cycloheptadiene moiety in berkeleydione. Berkeleydione serves as the key intermediate for the biosynthesis of paraherquonin as well as many other meroterpenoids. The cytochrome P450 monooxygenases prhB, prhD, and prhN, as well as the isomerase prhC, are probably involved in the late stage of paraherquonin biosynthesis, after the production of berkeleydione. Especially prhC might be a multifunctional enzyme that catalyzes the D-ring expansion via intramolecular methoxy rearrangement, as well as the hydrolysis of the expanded D-ring. In Penicillium brasilianum, this protein is Methyltransferase prhM.